Consider the following 463-residue polypeptide: Cysteine--tRNA ligase (463 aa).

Cys-28 is a Zn(2+) binding site. The 'HIGH' region motif lies at Ile-30 to His-40. Zn(2+) contacts are provided by Cys-211, His-236, and Glu-240. Positions Lys-268 to Ser-272 match the 'KMSKS' region motif. Lys-271 lines the ATP pocket.

It belongs to the class-I aminoacyl-tRNA synthetase family. In terms of assembly, monomer. Requires Zn(2+) as cofactor.

It localises to the cytoplasm. The catalysed reaction is tRNA(Cys) + L-cysteine + ATP = L-cysteinyl-tRNA(Cys) + AMP + diphosphate. The sequence is that of Cysteine--tRNA ligase from Wigglesworthia glossinidia brevipalpis.